The sequence spans 642 residues: UvrABC system protein C (642 aa).

One can recognise a GIY-YIG domain in the interval 20–97; the sequence is ERCGVYRMFD…IKKFQPKFNI (78 aa). A UVR domain is found at 207-242; sequence KELQENLSKKMEELSSQMRFEEAAEIRDRIKALSYV.

This sequence belongs to the UvrC family. In terms of assembly, interacts with UvrB in an incision complex.

The protein localises to the cytoplasm. In terms of biological role, the UvrABC repair system catalyzes the recognition and processing of DNA lesions. UvrC both incises the 5' and 3' sides of the lesion. The N-terminal half is responsible for the 3' incision and the C-terminal half is responsible for the 5' incision. This is UvrABC system protein C from Rickettsia felis (strain ATCC VR-1525 / URRWXCal2) (Rickettsia azadi).